We begin with the raw amino-acid sequence, 470 residues long: UDP-N-acetylmuramate--L-alanine ligase (470 aa).

118 to 124 is an ATP binding site; sequence GTHGKTT.

This sequence belongs to the MurCDEF family.

The protein localises to the cytoplasm. The catalysed reaction is UDP-N-acetyl-alpha-D-muramate + L-alanine + ATP = UDP-N-acetyl-alpha-D-muramoyl-L-alanine + ADP + phosphate + H(+). It participates in cell wall biogenesis; peptidoglycan biosynthesis. In terms of biological role, cell wall formation. This is UDP-N-acetylmuramate--L-alanine ligase from Cereibacter sphaeroides (strain ATCC 17029 / ATH 2.4.9) (Rhodobacter sphaeroides).